The following is a 91-amino-acid chain: YcgL domain-containing protein ETA_15380 (91 aa).

One can recognise a YcgL domain in the interval 1–85 (MFCVIYRSPQ…PLESLLKIHL (85 aa)).

In Erwinia tasmaniensis (strain DSM 17950 / CFBP 7177 / CIP 109463 / NCPPB 4357 / Et1/99), this protein is YcgL domain-containing protein ETA_15380.